A 20-amino-acid chain; its full sequence is Chrysophsin-3 (20 aa).

At histidine 20 the chain carries Histidine amide.

Gill.

Its subcellular location is the secreted. In terms of biological role, has antibacterial activity against Gram-positive bacteria B.subtilis ATCC 6633, L.garvieae ATCC 49156 and S.iniae F-8502, and Gram-negative bacteria E.coli WT-2, V.anguillarum ATCC 19264, V.penaeicida KHA, V.harveyi ATCC 14126, V.vulnificus ATCC 33148, A.salmonicida NCMB 1102 and P.putida ATCC 12633. Has hemolytic activity against human red blood cells. Seems to disrupt the membranes by adopting an alpha helical conformation. May play a significant role in innate host defense. The sequence is that of Chrysophsin-3 from Pagrus major (Red sea bream).